The chain runs to 590 residues: Myo-inositol transporter 3A (590 aa).

Residues 1–57 lie on the Cytoplasmic side of the membrane; sequence MSATHIENRDDSFLENKGIDHIGRPENNNGSQEPPSPSGFGGHLIDENLVRVEGEDK. The segment covering 15-24 has biased composition (basic and acidic residues); sequence ENKGIDHIGR. Residues 15-40 form a disordered region; the sequence is ENKGIDHIGRPENNNGSQEPPSPSGF. A helical transmembrane segment spans residues 58 to 78; sequence VTWYLCFLISASAIAGFLFGY. Over 79-105 the chain is Extracellular; the sequence is DTGVVGVALPLVGTDLGGSALNSSQQE. Residue N100 is glycosylated (N-linked (GlcNAc...) asparagine). The chain crosses the membrane as a helical span at residues 106–126; the sequence is IITAGTTIGAIFGSAILGGWG. The Cytoplasmic segment spans residues 127–132; the sequence is DRLGRK. A helical membrane pass occupies residues 133 to 153; it reads GAILVSDVFFTIGAVIIASSY. The Extracellular segment spans residues 154–157; sequence SVPQ. The chain crosses the membrane as a helical span at residues 158 to 178; the sequence is IIVGRIILGIGVGGAAVIAPL. At 179 to 192 the chain is on the cytoplasmic side; that stretch reads FITETAPTAVRGRC. A helical transmembrane segment spans residues 193 to 213; sequence IGVNAFFIPFGQVVSDAIGAG. The Extracellular segment spans residues 214–222; it reads VQNMHNGWR. Residues 223–243 traverse the membrane as a helical segment; that stretch reads LLFALGAVPSLLQLLLFHYLP. The Cytoplasmic portion of the chain corresponds to 244–325; it reads ESPRILILKG…AVSALQAAGQ (82 aa). Residues 326 to 346 traverse the membrane as a helical segment; sequence LTGFNTLLYYAGTLFGLLGLS. Residues 347-349 lie on the Extracellular side of the membrane; sequence NPA. A helical membrane pass occupies residues 350–370; the sequence is LGGLIPAGTNAVFVLIGMSLV. The Cytoplasmic portion of the chain corresponds to 371–376; that stretch reads DKVGRR. A helical membrane pass occupies residues 377–397; sequence GLLLIGVPIMLLGHVWNIVSF. Residues 398 to 420 lie on the Extracellular side of the membrane; that stretch reads YYMCKPTGGFLDTSYSYDTTDVG. Residues 421–441 form a helical membrane-spanning segment; it reads IVIGGIVFFVVGYGLTYSHLV. Residues 442–455 lie on the Cytoplasmic side of the membrane; sequence WYQAEYLTLEVRSM. A helical transmembrane segment spans residues 456-476; it reads GSGIATTVCWIANLVVSVSYL. Over 477-485 the chain is Extracellular; it reads SELETMTPS. A helical transmembrane segment spans residues 486-506; it reads GTYGFYFGISVIGFVFLVFCL. Topologically, residues 507–590 are cytoplasmic; that stretch reads PETKQLSIDE…GGKRTPSASV (84 aa).

This sequence belongs to the major facilitator superfamily. Sugar transporter (TC 2.A.1.1) family.

It localises to the cell membrane. The catalysed reaction is myo-inositol(out) + H(+)(out) = myo-inositol(in) + H(+)(in). Its function is as follows. Transporter for myo-inositol. The sequence is that of Myo-inositol transporter 3A (ITR3A) from Cryptococcus neoformans var. grubii serotype A (strain H99 / ATCC 208821 / CBS 10515 / FGSC 9487) (Filobasidiella neoformans var. grubii).